A 106-amino-acid chain; its full sequence is Small ribosomal subunit protein uS10 (106 aa).

It belongs to the universal ribosomal protein uS10 family. As to quaternary structure, part of the 30S ribosomal subunit.

In terms of biological role, involved in the binding of tRNA to the ribosomes. This is Small ribosomal subunit protein uS10 from Prochlorococcus marinus (strain MIT 9303).